The chain runs to 1300 residues: Kinesin-like protein KIN-4C (1300 aa).

In terms of domain architecture, Kinesin motor spans 6-360; sequence CVRVAVNIRP…LKYANRARNI (355 aa). Residue 85-92 participates in ATP binding; the sequence is GQTGSGKT. Coiled-coil stretches lie at residues 580 to 615, 653 to 697, and 781 to 823; these read TSVL…LASI, QLMR…RAWK, and EVTV…AKIS. Composition is skewed to basic and acidic residues over residues 956–971 and 1001–1013; these read ADEN…KQET and EWKP…RESE. Disordered stretches follow at residues 956-1018, 1097-1132, 1144-1187, and 1200-1300; these read ADEN…ESVI, NADG…QQQV, ALAD…RKKW, and PALP…TRRV. Composition is skewed to polar residues over residues 1169 to 1180, 1205 to 1222, 1230 to 1239, and 1275 to 1288; these read IGNTTGKSNVPR, THTN…TVDS, NSDSGESNSI, and GFVQ…SGSR. Basic and acidic residues predominate over residues 1289–1300; that stretch reads TSDEKENHTRRV.

This sequence belongs to the TRAFAC class myosin-kinesin ATPase superfamily. Kinesin family. KIN-4 subfamily. In terms of assembly, homodimer.

In terms of biological role, kinesin-like motor protein involved in the control of the oriented deposition of cellulose microfibrils. The polypeptide is Kinesin-like protein KIN-4C (Arabidopsis thaliana (Mouse-ear cress)).